A 352-amino-acid polypeptide reads, in one-letter code: F-box/kelch-repeat protein SKIP30 (352 aa).

The F-box domain occupies 9-55 (SGLLDGIPEAVALRCLAHVPLHLHPNLELVSRSWRAAIRSHELFRVR). Kelch repeat units follow at residues 57–109 (ELRS…TTAG), 110–167 (MLFV…VLQG), 168–215 (KIVV…LVVN), 243–293 (YGWP…MTSL), and 296–351 (EVLI…TQLT).

Part of a SCF (ASK-cullin-F-box) protein ligase complex. Interacts with SKP1A/ASK1.

It participates in protein modification; protein ubiquitination. Component of SCF(ASK-cullin-F-box) E3 ubiquitin ligase complexes, which may mediate the ubiquitination and subsequent proteasomal degradation of target proteins. The protein is F-box/kelch-repeat protein SKIP30 (SKIP30) of Arabidopsis thaliana (Mouse-ear cress).